Here is a 437-residue protein sequence, read N- to C-terminus: Testis-specific Y-encoded-like protein 1 (437 aa).

Residues 1–81 are disordered; sequence MSGLDGVKRT…QDAAGRGGTP (81 aa). The span at 11–26 shows a compositional bias: polar residues; it reads TPLQTHSIIISDQVPS. Positions 28-40 are enriched in basic and acidic residues; that stretch reads QDAHQYLRLRDQS. K156 participates in a covalent cross-link: Glycyl lysine isopeptide (Lys-Gly) (interchain with G-Cter in SUMO2).

This sequence belongs to the nucleosome assembly protein (NAP) family. Ubiquitinated by the CRL2(APPBP2) complex, which recognizes the Arg-Xaa-Xaa-Gly sequence at the C-terminus, leading to its degradation. In terms of tissue distribution, expressed in testis, ovary, liver, spleen, brain, kidney, prostate, lung, liver, and heart.

It localises to the nucleus. The protein resides in the nucleolus. The chain is Testis-specific Y-encoded-like protein 1 (TSPYL1) from Homo sapiens (Human).